Reading from the N-terminus, the 197-residue chain is Cytochrome c-L (197 aa).

An N-terminal signal peptide occupies residues 1 to 25; sequence MMNRVKIGTALLGLTLAGIALPALA. Positions 90, 93, and 94 each coordinate heme c.

Post-translationally, binds 1 heme c group covalently per subunit.

Its subcellular location is the periplasm. Functionally, electron acceptor for MDH. Acts in methanol oxidation. This Methylorubrum extorquens (strain ATCC 14718 / DSM 1338 / JCM 2805 / NCIMB 9133 / AM1) (Methylobacterium extorquens) protein is Cytochrome c-L (moxG).